We begin with the raw amino-acid sequence, 96 residues long: MIKVTKDLVLHLENLARLELSEDQRESLMKDFQEILDYVELLNEVDVEGVEPMYTPVEDSAKLRKGDPRFFEMRDLIKKNFPEEKDGHIKVPGIHR.

Belongs to the GatC family. Heterotrimer of A, B and C subunits.

It catalyses the reaction L-glutamyl-tRNA(Gln) + L-glutamine + ATP + H2O = L-glutaminyl-tRNA(Gln) + L-glutamate + ADP + phosphate + H(+). The enzyme catalyses L-aspartyl-tRNA(Asn) + L-glutamine + ATP + H2O = L-asparaginyl-tRNA(Asn) + L-glutamate + ADP + phosphate + 2 H(+). Allows the formation of correctly charged Asn-tRNA(Asn) or Gln-tRNA(Gln) through the transamidation of misacylated Asp-tRNA(Asn) or Glu-tRNA(Gln) in organisms which lack either or both of asparaginyl-tRNA or glutaminyl-tRNA synthetases. The reaction takes place in the presence of glutamine and ATP through an activated phospho-Asp-tRNA(Asn) or phospho-Glu-tRNA(Gln). The sequence is that of Glutamyl-tRNA(Gln) amidotransferase subunit C (gatC) from Thermotoga maritima (strain ATCC 43589 / DSM 3109 / JCM 10099 / NBRC 100826 / MSB8).